A 535-amino-acid polypeptide reads, in one-letter code: CTP synthase (535 aa).

The amidoligase domain stretch occupies residues 1–266; the sequence is MKTKFIFITG…DEQVVEKLNI (266 aa). Residue S14 participates in CTP binding. UTP is bound at residue S14. ATP is bound by residues 15-20 and D72; that span reads SIGKGL. D72 and E140 together coordinate Mg(2+). Residues 147 to 149, 187 to 192, and K223 contribute to the CTP site; these read DIE and KTKPTQ. Residues 187–192 and K223 each bind UTP; that span reads KTKPTQ. One can recognise a Glutamine amidotransferase type-1 domain in the interval 292–534; that stretch reads RIAIVGKYVN…IGASLTHRNQ (243 aa). G354 contributes to the L-glutamine binding site. C381 functions as the Nucleophile; for glutamine hydrolysis in the catalytic mechanism. Residues 382–385, E405, and R462 each bind L-glutamine; that span reads LGMQ. Residues H507 and E509 contribute to the active site.

The protein belongs to the CTP synthase family. Homotetramer.

The enzyme catalyses UTP + L-glutamine + ATP + H2O = CTP + L-glutamate + ADP + phosphate + 2 H(+). It catalyses the reaction L-glutamine + H2O = L-glutamate + NH4(+). The catalysed reaction is UTP + NH4(+) + ATP = CTP + ADP + phosphate + 2 H(+). Its pathway is pyrimidine metabolism; CTP biosynthesis via de novo pathway; CTP from UDP: step 2/2. With respect to regulation, allosterically activated by GTP, when glutamine is the substrate; GTP has no effect on the reaction when ammonia is the substrate. The allosteric effector GTP functions by stabilizing the protein conformation that binds the tetrahedral intermediate(s) formed during glutamine hydrolysis. Inhibited by the product CTP, via allosteric rather than competitive inhibition. Its function is as follows. Catalyzes the ATP-dependent amination of UTP to CTP with either L-glutamine or ammonia as the source of nitrogen. Regulates intracellular CTP levels through interactions with the four ribonucleotide triphosphates. The protein is CTP synthase of Trichlorobacter lovleyi (strain ATCC BAA-1151 / DSM 17278 / SZ) (Geobacter lovleyi).